The chain runs to 238 residues: Orotidine 5'-phosphate decarboxylase (238 aa).

Residues aspartate 10, lysine 32, 59-68 (DLKLHDIPNT), threonine 122, arginine 184, glutamine 193, glycine 213, and arginine 214 contribute to the substrate site. Lysine 61 acts as the Proton donor in catalysis.

The protein belongs to the OMP decarboxylase family. Type 1 subfamily. As to quaternary structure, homodimer.

It catalyses the reaction orotidine 5'-phosphate + H(+) = UMP + CO2. It participates in pyrimidine metabolism; UMP biosynthesis via de novo pathway; UMP from orotate: step 2/2. In terms of biological role, catalyzes the decarboxylation of orotidine 5'-monophosphate (OMP) to uridine 5'-monophosphate (UMP). In Bacillus cereus (strain G9842), this protein is Orotidine 5'-phosphate decarboxylase.